A 103-amino-acid polypeptide reads, in one-letter code: Co-chaperonin GroES (103 aa).

It belongs to the GroES chaperonin family. Heptamer of 7 subunits arranged in a ring. Interacts with the chaperonin GroEL.

The protein resides in the cytoplasm. In terms of biological role, together with the chaperonin GroEL, plays an essential role in assisting protein folding. The GroEL-GroES system forms a nano-cage that allows encapsulation of the non-native substrate proteins and provides a physical environment optimized to promote and accelerate protein folding. GroES binds to the apical surface of the GroEL ring, thereby capping the opening of the GroEL channel. The polypeptide is Co-chaperonin GroES (Crocosphaera subtropica (strain ATCC 51142 / BH68) (Cyanothece sp. (strain ATCC 51142))).